A 307-amino-acid chain; its full sequence is Acetaldehyde dehydrogenase 2 (307 aa).

The active-site Acyl-thioester intermediate is cysteine 131. NAD(+)-binding positions include 162–170 (SVGPGTRKN) and asparagine 273.

It belongs to the acetaldehyde dehydrogenase family.

The catalysed reaction is acetaldehyde + NAD(+) + CoA = acetyl-CoA + NADH + H(+). The protein is Acetaldehyde dehydrogenase 2 (aphF) of Comamonas testosteroni (Pseudomonas testosteroni).